The following is a 172-amino-acid chain: MGVFSPSTTRLTLKWFSLSVALFLLFHWGIPSVDGHEDNMYGEEIQQQRRSCDPQRDPQRLSSCRDYLERRREQPSERCCEELQRMSPQCRCQAIQQMLDQSLSYDSFMDSDSQEDAPLNQRRRRREGRGREEEEAMERAAYLPNTCNVREPPRRCDIQRHSRYSMTGSSFK.

Residues 1–35 form the signal peptide; it reads MGVFSPSTTRLTLKWFSLSVALFLLFHWGIPSVDG. The interval 108-172 is disordered; it reads FMDSDSQEDA…RYSMTGSSFK (65 aa). Basic and acidic residues predominate over residues 151–160; the sequence is EPPRRCDIQR.

The protein belongs to the 2S seed storage albumins family.

In Picea glauca (White spruce), this protein is 2S seed storage-like protein.